The primary structure comprises 415 residues: Cyclin-A2 (415 aa).

Belongs to the cyclin family. Cyclin AB subfamily. In terms of assembly, interacts with the CDK1 and CDK2 protein kinases to form serine/threonine kinase holoenzyme complexes. Ubiquitous.

The protein resides in the nucleus. The protein localises to the cytoplasm. Its function is as follows. Cyclin which controls both the G1/S and the G2/M transition phases of the cell cycle. Functions through the formation of specific serine/threonine kinase holoenzyme complexes with the cyclin-dependent protein kinases CDK1 and CDK2. The cyclin subunit confers the substrate specificity of these complexes and differentially interacts with and activates CDK1 and CDK2 throughout the cell cycle. The polypeptide is Cyclin-A2 (ccna2) (Xenopus laevis (African clawed frog)).